Consider the following 89-residue polypeptide: Small ribosomal subunit protein uS15 (89 aa).

Belongs to the universal ribosomal protein uS15 family. In terms of assembly, part of the 30S ribosomal subunit. Forms a bridge to the 50S subunit in the 70S ribosome, contacting the 23S rRNA.

Its function is as follows. One of the primary rRNA binding proteins, it binds directly to 16S rRNA where it helps nucleate assembly of the platform of the 30S subunit by binding and bridging several RNA helices of the 16S rRNA. Forms an intersubunit bridge (bridge B4) with the 23S rRNA of the 50S subunit in the ribosome. This is Small ribosomal subunit protein uS15 from Streptococcus uberis (strain ATCC BAA-854 / 0140J).